A 259-amino-acid polypeptide reads, in one-letter code: UPF0739 protein C1orf74 homolog (259 aa).

Belongs to the UPF0739 family.

This is UPF0739 protein C1orf74 homolog from Danio rerio (Zebrafish).